The sequence spans 301 residues: Polynucleotide kinase (301 aa).

Homotetramer. Mg(2+) serves as cofactor.

It catalyses the reaction a 5'-end dephospho-2'-deoxyribonucleoside-DNA + ATP = a 5'-end 5'-phospho-2'-deoxyribonucleoside-DNA + ADP + H(+). The catalysed reaction is a 2'-deoxyribonucleoside 3'-phosphate + H2O = a 2'-deoxyribonucleoside + phosphate. Acts as a 5'-hydroxyl kinase, a 3'-phosphatase and a 2',3'-cyclic phosphodiesterase. Catalyzes the transfer of the terminal phosphate of ATP to the 5'-hydroxyl termini of ribo- and deoxyribonucleotides. In the presence of ADP the enzyme also catalyzes an exchange reaction. In the exchange reaction, an excess ADP causes the enzyme to transfer the 5' terminal phosphate from phosphorylated DNA to ADP. Involved in countering a host defense mechanism which activates T4-induced anticodon nuclease and shuts off viral translation. The polynucleotide kinase modifies the ends of nicked tRNA generated by the antiviral response of the host bacteria and facilitates repair by T4 RNA ligase. The polypeptide is Polynucleotide kinase (pseT) (Escherichia coli (Bacteriophage T4)).